Here is a 692-residue protein sequence, read N- to C-terminus: Elongation factor G (692 aa).

The region spanning 8–283 (NRIRNIGIAA…AVIDYLPAPT (276 aa)) is the tr-type G domain. Residues 17-24 (AHIDAGKT), 81-85 (DTPGH), and 135-138 (NKMD) each bind GTP.

Belongs to the TRAFAC class translation factor GTPase superfamily. Classic translation factor GTPase family. EF-G/EF-2 subfamily.

The protein localises to the cytoplasm. Functionally, catalyzes the GTP-dependent ribosomal translocation step during translation elongation. During this step, the ribosome changes from the pre-translocational (PRE) to the post-translocational (POST) state as the newly formed A-site-bound peptidyl-tRNA and P-site-bound deacylated tRNA move to the P and E sites, respectively. Catalyzes the coordinated movement of the two tRNA molecules, the mRNA and conformational changes in the ribosome. This Helicobacter pylori (strain J99 / ATCC 700824) (Campylobacter pylori J99) protein is Elongation factor G (fusA).